A 146-amino-acid chain; its full sequence is 3-dehydroquinate dehydratase (146 aa).

Tyrosine 24 acts as the Proton acceptor in catalysis. Substrate contacts are provided by asparagine 73, histidine 79, and aspartate 86. Histidine 99 serves as the catalytic Proton donor. Substrate contacts are provided by residues 100–101 (LS) and arginine 110.

It belongs to the type-II 3-dehydroquinase family. In terms of assembly, homododecamer.

The enzyme catalyses 3-dehydroquinate = 3-dehydroshikimate + H2O. It functions in the pathway metabolic intermediate biosynthesis; chorismate biosynthesis; chorismate from D-erythrose 4-phosphate and phosphoenolpyruvate: step 3/7. In terms of biological role, catalyzes a trans-dehydration via an enolate intermediate. This is 3-dehydroquinate dehydratase from Shewanella baltica (strain OS185).